The chain runs to 302 residues: Polyamine aminopropyltransferase (302 aa).

The PABS domain occupies 4-239; that stretch reads WTWHLEWQTP…GLWGFIYASD (236 aa). Glutamine 33 is a binding site for S-methyl-5'-thioadenosine. Histidine 64 and glutamate 88 together coordinate spermidine. Residues aspartate 108 and 140 to 141 each bind S-methyl-5'-thioadenosine; that span reads DG. Aspartate 158 serves as the catalytic Proton acceptor. Proline 167 lines the S-methyl-5'-thioadenosine pocket.

It belongs to the spermidine/spermine synthase family. As to quaternary structure, homodimer or homotetramer.

The protein resides in the cytoplasm. The catalysed reaction is S-adenosyl 3-(methylsulfanyl)propylamine + putrescine = S-methyl-5'-thioadenosine + spermidine + H(+). The protein operates within amine and polyamine biosynthesis; spermidine biosynthesis; spermidine from putrescine: step 1/1. Catalyzes the irreversible transfer of a propylamine group from the amino donor S-adenosylmethioninamine (decarboxy-AdoMet) to putrescine (1,4-diaminobutane) to yield spermidine. The protein is Polyamine aminopropyltransferase of Sulfolobus acidocaldarius (strain ATCC 33909 / DSM 639 / JCM 8929 / NBRC 15157 / NCIMB 11770).